The primary structure comprises 855 residues: Dynein axonemal assembly factor 5 (855 aa).

Residue Ala2 is modified to N-acetylalanine. 10 HEAT repeats span residues 71 to 109 (GPWA…RAAR), 202 to 240 (HMQS…FGNG), 241 to 278 (KSVD…CLRD), 280 to 318 (YSFF…QWQK), 354 to 376 (FRNL…VGTR), 377 to 414 (VKSA…DEEA), 599 to 638 (GEAL…RATD), 696 to 734 (RDVQ…TSGG), 738 to 776 (PEKL…CVKG), and 784 to 822 (QSSV…LFPD).

This sequence belongs to the DNAAF5 family. As to quaternary structure, interacts with DNAI2; probably involved in outer arm dynein assembly. Expressed in nasal epithelium and lung epithelium by ciliated cells (at protein level).

The protein resides in the cytoplasm. Its subcellular location is the dynein axonemal particle. Cytoplasmic protein involved in the delivery of the dynein machinery to the motile cilium. It is required for the assembly of the axonemal dynein inner and outer arms, two structures attached to the peripheral outer doublet A microtubule of the axoneme, that play a crucial role in cilium motility. The polypeptide is Dynein axonemal assembly factor 5 (Homo sapiens (Human)).